Reading from the N-terminus, the 705-residue chain is Translation initiation factor IF-2 (705 aa).

The disordered stretch occupies residues 40–124 (DDQIKALDKK…QPAAPKEIPS (85 aa)). Positions 41–58 (DQIKALDKKFKKEQKNDN) are enriched in basic and acidic residues. Low complexity predominate over residues 59–77 (KQSTQNNHQKSNNQNQNKG). Residues 94–108 (KGNKKNNRNNKKNNK) are compositionally biased toward basic residues. A tr-type G domain is found at 207-376 (ERPAVVTIMG…GLVAEVQELK (170 aa)). Residues 216–223 (GHVDHGKT) form a G1 region. Residue 216–223 (GHVDHGKT) coordinates GTP. Positions 241-245 (GITQH) are G2. Residues 262-265 (DTPG) form a G3 region. GTP is bound by residues 262–266 (DTPGH) and 316–319 (NKID). Positions 316–319 (NKID) are G4. Residues 352-354 (SAL) form a G5 region.

Belongs to the TRAFAC class translation factor GTPase superfamily. Classic translation factor GTPase family. IF-2 subfamily.

The protein localises to the cytoplasm. Functionally, one of the essential components for the initiation of protein synthesis. Protects formylmethionyl-tRNA from spontaneous hydrolysis and promotes its binding to the 30S ribosomal subunits. Also involved in the hydrolysis of GTP during the formation of the 70S ribosomal complex. The sequence is that of Translation initiation factor IF-2 from Staphylococcus aureus (strain Mu3 / ATCC 700698).